We begin with the raw amino-acid sequence, 208 residues long: uncharacterized protein (208 aa).

The N-terminal stretch at 1–16 (MTRVALLTTGRELSQA) is a signal peptide. 2 disordered regions span residues 1–95 (MTRV…VRGQ) and 145–176 (RVTK…SAAD). Positions 16–25 (AAPPARARTP) are enriched in low complexity. The span at 32 to 43 (RGERPDDGGHAP) shows a compositional bias: basic and acidic residues. Positions 44–54 (HRDRRVNQRRR) are enriched in basic residues. Over residues 55–95 (QVGDRRAQRGVDEHPWRRPDERPNDHLPQRNSERPEGVRGQ) the composition is skewed to basic and acidic residues. Composition is skewed to polar residues over residues 148–158 (KVSSSGPNSTP) and 167–176 (GTNNAPSAAD).

This is an uncharacterized protein from Mycobacterium tuberculosis (strain CDC 1551 / Oshkosh).